Consider the following 311-residue polypeptide: 26S proteasome regulatory subunit RPN11 (311 aa).

Residues 32–167 (VYISSLALLK…IDAFRLISPA (136 aa)) enclose the MPN domain. Residues His-114, His-116, and Asp-127 each contribute to the Zn(2+) site. Residues 114-127 (HSHPGFGCWLSSVD) carry the JAMM motif motif.

This sequence belongs to the peptidase M67A family.

Functionally, acts as a regulatory subunit of the 26 proteasome which is involved in the ATP-dependent degradation of ubiquitinated proteins. The polypeptide is 26S proteasome regulatory subunit RPN11 (RPN11) (Eremothecium gossypii (strain ATCC 10895 / CBS 109.51 / FGSC 9923 / NRRL Y-1056) (Yeast)).